The sequence spans 508 residues: Maturase K (508 aa).

Belongs to the intron maturase 2 family. MatK subfamily.

It is found in the plastid. It localises to the chloroplast. In terms of biological role, usually encoded in the trnK tRNA gene intron. Probably assists in splicing its own and other chloroplast group II introns. The sequence is that of Maturase K from Abrus precatorius (Indian licorice).